The following is a 184-amino-acid chain: ATP synthase subunit delta (184 aa).

It belongs to the ATPase delta chain family. F-type ATPases have 2 components, F(1) - the catalytic core - and F(0) - the membrane proton channel. F(1) has five subunits: alpha(3), beta(3), gamma(1), delta(1), epsilon(1). F(0) has three main subunits: a(1), b(2) and c(10-14). The alpha and beta chains form an alternating ring which encloses part of the gamma chain. F(1) is attached to F(0) by a central stalk formed by the gamma and epsilon chains, while a peripheral stalk is formed by the delta and b chains.

It localises to the cell inner membrane. F(1)F(0) ATP synthase produces ATP from ADP in the presence of a proton or sodium gradient. F-type ATPases consist of two structural domains, F(1) containing the extramembraneous catalytic core and F(0) containing the membrane proton channel, linked together by a central stalk and a peripheral stalk. During catalysis, ATP synthesis in the catalytic domain of F(1) is coupled via a rotary mechanism of the central stalk subunits to proton translocation. Its function is as follows. This protein is part of the stalk that links CF(0) to CF(1). It either transmits conformational changes from CF(0) to CF(1) or is implicated in proton conduction. The polypeptide is ATP synthase subunit delta (Paramagnetospirillum magneticum (strain ATCC 700264 / AMB-1) (Magnetospirillum magneticum)).